Reading from the N-terminus, the 197-residue chain is Cell division protein SepF (197 aa).

A disordered region spans residues 15-89 (EEEEVEGPEE…RMNNNSKNNS (75 aa)). Positions 22-42 (PEERESSRSRERVQEREDYNR) are enriched in basic and acidic residues. The segment covering 43 to 73 (NENQATPQTFNNKQQAIKSVPQKNTLRSNTT) has biased composition (polar residues). Low complexity predominate over residues 80 to 89 (RMNNNSKNNS).

The protein belongs to the SepF family. In terms of assembly, homodimer. Interacts with FtsZ.

It is found in the cytoplasm. In terms of biological role, cell division protein that is part of the divisome complex and is recruited early to the Z-ring. Probably stimulates Z-ring formation, perhaps through the cross-linking of FtsZ protofilaments. Its function overlaps with FtsA. The protein is Cell division protein SepF of Staphylococcus epidermidis (strain ATCC 35984 / DSM 28319 / BCRC 17069 / CCUG 31568 / BM 3577 / RP62A).